The chain runs to 241 residues: tRNA pseudouridine synthase A (241 aa).

Catalysis depends on D51, which acts as the Nucleophile. Residue Y110 coordinates substrate.

It belongs to the tRNA pseudouridine synthase TruA family. In terms of assembly, homodimer.

The catalysed reaction is uridine(38/39/40) in tRNA = pseudouridine(38/39/40) in tRNA. Its function is as follows. Formation of pseudouridine at positions 38, 39 and 40 in the anticodon stem and loop of transfer RNAs. The polypeptide is tRNA pseudouridine synthase A (Campylobacter jejuni subsp. doylei (strain ATCC BAA-1458 / RM4099 / 269.97)).